The sequence spans 126 residues: Large ribosomal subunit protein bL12 (126 aa).

Belongs to the bacterial ribosomal protein bL12 family. As to quaternary structure, homodimer. Part of the ribosomal stalk of the 50S ribosomal subunit. Forms a multimeric L10(L12)X complex, where L10 forms an elongated spine to which 2 to 4 L12 dimers bind in a sequential fashion. Binds GTP-bound translation factors.

In terms of biological role, forms part of the ribosomal stalk which helps the ribosome interact with GTP-bound translation factors. Is thus essential for accurate translation. This is Large ribosomal subunit protein bL12 from Beijerinckia indica subsp. indica (strain ATCC 9039 / DSM 1715 / NCIMB 8712).